A 308-amino-acid polypeptide reads, in one-letter code: Aldo-keto reductase AKR2E4 (308 aa).

NADP(+) is bound by residues 22 to 29 and D53; that span reads GTGRGTAK. Y58 acts as the Proton donor in catalysis. Residues 158–159, R215, and 259–269 each bind NADP(+); these read SN and KSTNKQRIAQN.

Belongs to the short-chain dehydrogenases/reductases (SDR) family. In terms of tissue distribution, detected in hemolymph (at protein level). Detected in larval ovary.

Its activity is regulated as follows. Subject to substrate inhibition by high levels of 3-dehydroecdysone. Its function is as follows. NADP-dependent oxidoreductase with high 3-dehydroecdysone reductase activity. May play a role in the regulation of molting. Has lower activity with phenylglyoxal and isatin (in vitro). Has no activity with NADH as cosubstrate. Has no activity with nitrobenzaldehyde and 3-hydroxybenzaldehyde. This is Aldo-keto reductase AKR2E4 (akr2e) from Bombyx mori (Silk moth).